The following is a 261-amino-acid chain: Anamorsin homolog (261 aa).

The segment at 4 to 134 (VQENNQVLYI…EIGSAAKLSL (131 aa)) is N-terminal SAM-like domain. Residues 134-173 (LGGGANKAKVAAVWKLDVDDDGEAEERIDEDELLDEEDKV) form a linker region. Residues Cys-183, Cys-192, Cys-195, and Cys-197 each contribute to the [2Fe-2S] cluster site. A fe-S binding site A region spans residues 183 to 197 (CGTTGKRKACKDCSC). The [4Fe-4S] cluster site is built by Cys-222, Cys-225, Cys-233, and Cys-236. 2 consecutive short sequence motifs (cx2C motif) follow at residues 222–225 (CGSC) and 233–236 (CATC). The fe-S binding site B stretch occupies residues 222–236 (CGSCYLGDAFRCATC).

Belongs to the anamorsin family. As to quaternary structure, monomer. Requires [2Fe-2S] cluster as cofactor. [4Fe-4S] cluster serves as cofactor.

It is found in the cytoplasm. The protein resides in the mitochondrion intermembrane space. Component of the cytosolic iron-sulfur (Fe-S) protein assembly (CIA) machinery. Required for the maturation of extramitochondrial Fe-S proteins. Part of an electron transfer chain functioning in an early step of cytosolic Fe-S biogenesis, facilitating the de novo assembly of a [4Fe-4S] cluster on the cytosolic Fe-S scaffold complex. Electrons are transferred from NADPH via a FAD- and FMN-containing diflavin oxidoreductase. Together with the diflavin oxidoreductase, also required for the assembly of the diferric tyrosyl radical cofactor of ribonucleotide reductase (RNR), probably by providing electrons for reduction during radical cofactor maturation in the catalytic small subunit. This chain is Anamorsin homolog, found in Culex quinquefasciatus (Southern house mosquito).